Reading from the N-terminus, the 85-residue chain is Putative membrane protein insertion efficiency factor (85 aa).

The protein belongs to the UPF0161 family.

Its subcellular location is the cell membrane. Could be involved in insertion of integral membrane proteins into the membrane. The chain is Putative membrane protein insertion efficiency factor from Buchnera aphidicola subsp. Schizaphis graminum (strain Sg).